Here is a 123-residue protein sequence, read N- to C-terminus: Large ribosomal subunit protein bL17 (123 aa).

It belongs to the bacterial ribosomal protein bL17 family. Part of the 50S ribosomal subunit. Contacts protein L32.

In Borreliella burgdorferi (strain ATCC 35210 / DSM 4680 / CIP 102532 / B31) (Borrelia burgdorferi), this protein is Large ribosomal subunit protein bL17.